The chain runs to 396 residues: Elongation factor Tu 2 (396 aa).

A tr-type G domain is found at 10 to 206; that stretch reads KPHVNVGTIG…TLDTYIPEPE (197 aa). The G1 stretch occupies residues 19-26; the sequence is GHVDHGKT. 19-26 provides a ligand contact to GTP; the sequence is GHVDHGKT. Thr-26 contacts Mg(2+). A G2 region spans residues 60–64; it reads GITIN. Residues 81 to 84 are G3; the sequence is DCPG. GTP-binding positions include 81–85 and 136–139; these read DCPGH and NKCD. The G4 stretch occupies residues 136-139; it reads NKCD. Positions 174-176 are G5; it reads SAL.

This sequence belongs to the TRAFAC class translation factor GTPase superfamily. Classic translation factor GTPase family. EF-Tu/EF-1A subfamily. As to quaternary structure, monomer.

The protein localises to the cytoplasm. The enzyme catalyses GTP + H2O = GDP + phosphate + H(+). Its function is as follows. GTP hydrolase that promotes the GTP-dependent binding of aminoacyl-tRNA to the A-site of ribosomes during protein biosynthesis. This chain is Elongation factor Tu 2, found in Psychrobacter sp. (strain PRwf-1).